Here is a 405-residue protein sequence, read N- to C-terminus: Phosphoglycerate kinase (405 aa).

Residues 21–23, Arg-38, 59–62, Arg-116, and Arg-156 contribute to the substrate site; these read DFN and HQSR. ATP-binding positions include Glu-330 and 355 to 358; that span reads GGHT.

Belongs to the phosphoglycerate kinase family. In terms of assembly, monomer.

Its subcellular location is the cytoplasm. It carries out the reaction (2R)-3-phosphoglycerate + ATP = (2R)-3-phospho-glyceroyl phosphate + ADP. It participates in carbohydrate degradation; glycolysis; pyruvate from D-glyceraldehyde 3-phosphate: step 2/5. This chain is Phosphoglycerate kinase, found in Methanocorpusculum labreanum (strain ATCC 43576 / DSM 4855 / Z).